A 906-amino-acid chain; its full sequence is MASFHLDHLKNYHRRYCRSSRAPNIHTKKGQNMLEILQDCFEDQSKASFLDDFTESLTSSTQKKKANYSQSSSKKCPESHSKPVPVSSRTGEASLQASAEPSEAAGGSVQANEVHHGASDELDLCVGSPVVLLDANVNTLQKAASPAGQKRVASVSRSPVDRQASNKNISFKTRKRLNFEDKVTLSTAETENSVLQVEDNLSKGQEGTSSEITQKRDDLSSDVQSRSKKNFSELFLETVKRKSKSSSVVRHTAAVPFSPPPPSDMKLLEDEFIIDRSDRSFSSRLWVMIPSKDRHLSAHKPSPENTALLQGKKSREKSHSLSAMTFARNTQSDKAHPIEEAQLSVEENPATTCTDELENDCRSPENKMQSETAKTPPAWERTTKQSQRRVSKPKAAEELRKGQSSWENSNVSNTGQDKLQINSKRNMKDCEEVRNEPNPKKQKPALENKKKTNSTQTNKEKSGKKFFSGGSKNKFVPKKVTLTSRRSCRISQRPSEWWRVKSDESSVDRNPSKENNSPVVYPNKKKQTKRNHVSKRAGKKPGSSKRQKTEMSPRVQKSLNVKDSGGTVSGHDDTSRSQRKPLKIIEADPTQKSLAISRPKRGCKYRNNVMTSPNVHLKSHTEEYTSKTQMESASNSEMSKRSVWEESGPSRFKNYEMPGSSNSEMGDEQDQKSLHFTTRSFNMVPDKKLHHKLVLPSNSPNVRRSNRIRLKPLEYWRGERVDYQESSSGQLVLEIISPSSVPTKIKAQRNLGKVNKKVTKKPTHLNSHEKAKMELPLDMRLGDPFQATLAKDPETAELVPMDLIRPRDTYRFFVEQHGLKVFKTLDTIYFSTGKLVLGPYEEKGKQHVGQDILVFYVNFGDLLCTLHETPYKLTTGDSFYVPSGNHYNIKNLLNVESSLLFTQIKR.

Polar residues-rich tracts occupy residues 56-74 (SLTS…SSSK) and 87-96 (SSRTGEASLQ). Disordered regions lie at residues 56 to 115 (SLTS…NEVH) and 141 to 169 (QKAA…NKNI). Phosphoserine occurs at positions 71 and 94. The segment covering 97-108 (ASAEPSEAAGGS) has biased composition (low complexity). Glycyl lysine isopeptide (Lys-Gly) (interchain with G-Cter in SUMO2) cross-links involve residues K150 and K182. The tract at residues 197 to 224 (VEDNLSKGQEGTSSEITQKRDDLSSDVQ) is disordered. A compositionally biased stretch (polar residues) spans 202–212 (SKGQEGTSSEI). The short motif at 228-242 (KKNFSELFLETVKRK) is the Nuclear localization signal element. Residues K229, K240, K242, and K266 each participate in a glycyl lysine isopeptide (Lys-Gly) (interchain with G-Cter in SUMO2) cross-link. 3 disordered regions span residues 294 to 320 (RHLS…KSHS), 341 to 596 (AQLS…SLAI), and 623 to 671 (EYTS…EQDQ). Residues S302, S344, S363, and S404 each carry the phosphoserine modification. Over residues 402–424 (GQSSWENSNVSNTGQDKLQINSK) the composition is skewed to polar residues. The segment covering 426–450 (NMKDCEEVRNEPNPKKQKPALENKK) has biased composition (basic and acidic residues). The Nuclear localization signal motif lies at 449–466 (KKKTNSTQTNKEKSGKKF). The segment covering 465-474 (KFFSGGSKNK) has biased composition (low complexity). Positions 481-494 (TLTSRRSCRISQRP) are enriched in polar residues. Position 495 is a phosphoserine (S495). Positions 496–512 (EWWRVKSDESSVDRNPS) are enriched in basic and acidic residues. K501 participates in a covalent cross-link: Glycyl lysine isopeptide (Lys-Gly) (interchain with G-Cter in SUMO2). At S505 the chain carries Phosphoserine. Over residues 523-546 (NKKKQTKRNHVSKRAGKKPGSSKR) the composition is skewed to basic residues. Positions 525–540 (KKQTKRNHVSKRAGKK) match the Nuclear localization signal motif. Positions 626-637 (SKTQMESASNSE) are enriched in polar residues. K640 participates in a covalent cross-link: Glycyl lysine isopeptide (Lys-Gly) (interchain with G-Cter in SUMO2). Residues S647 and S673 each carry the phosphoserine modification. K692 is covalently cross-linked (Glycyl lysine isopeptide (Lys-Gly) (interchain with G-Cter in SUMO2)). An MIF2 homology domain II region spans residues 702 to 724 (VRRSNRIRLKPLEYWRGERVDYQ). A phosphoserine mark is found at S728 and S737. A Nuclear localization signal motif is present at residues 744-762 (KIKAQRNLGKVNKKVTKKP). K770 participates in a covalent cross-link: Glycyl lysine isopeptide (Lys-Gly) (interchain with G-Cter in SUMO2). The interval 853 to 906 (LVFYVNFGDLLCTLHETPYKLTTGDSFYVPSGNHYNIKNLLNVESSLLFTQIKR) is MIF2 homology domain III.

It belongs to the CENP-C/MIF2 family. In terms of assembly, oligomer. Component of the CENPA-NAC complex, at least composed of CENPA, CENPC, CENPH, CENPM, CENPN, CENPT and CENPU. The CENPA-NAC complex interacts with the CENPA-CAD complex, composed of CENPI, CENPK, CENPL, CENPO, CENPP, CENPQ, CENPR and CENPS. Binds to DAXX. Interacts with DNMT3B. Interacts directly with CENPA. Identified in a centromere complex containing histones H2A, H2B and H4, and at least CENPA, CENPB, CENPC, CENPT, CENPN, HJURP, SUPT16H, SSRP1 and RSF1. Interacts with MEIKIN.

Its subcellular location is the nucleus. The protein resides in the chromosome. It is found in the centromere. The protein localises to the kinetochore. In terms of biological role, component of the CENPA-NAC (nucleosome-associated) complex, a complex that plays a central role in assembly of kinetochore proteins, mitotic progression and chromosome segregation. The CENPA-NAC complex recruits the CENPA-CAD (nucleosome distal) complex and may be involved in incorporation of newly synthesized CENPA into centromeres. CENPC recruits DNA methylation and DNMT3B to both centromeric and pericentromeric satellite repeats and regulates the histone code in these regions. In Mus musculus (Mouse), this protein is Centromere protein C (Cenpc).